The following is a 407-amino-acid chain: 1-deoxy-D-xylulose 5-phosphate reductoisomerase (407 aa).

8 residues coordinate NADPH: Thr27, Gly28, Ser29, Ile30, Ala53, Arg54, Asn55, and Asn140. 1-deoxy-D-xylulose 5-phosphate is bound at residue Lys141. An NADPH-binding site is contributed by Glu142. Asp166 is a Mn(2+) binding site. 1-deoxy-D-xylulose 5-phosphate contacts are provided by Ser167, Glu168, Ser192, and His215. Residue Glu168 coordinates Mn(2+). Gly221 is an NADPH binding site. 1-deoxy-D-xylulose 5-phosphate is bound by residues Ser228, Asn233, Lys234, and Glu237. Glu237 is a Mn(2+) binding site.

The protein belongs to the DXR family. It depends on Mg(2+) as a cofactor. Mn(2+) serves as cofactor.

The catalysed reaction is 2-C-methyl-D-erythritol 4-phosphate + NADP(+) = 1-deoxy-D-xylulose 5-phosphate + NADPH + H(+). Its pathway is isoprenoid biosynthesis; isopentenyl diphosphate biosynthesis via DXP pathway; isopentenyl diphosphate from 1-deoxy-D-xylulose 5-phosphate: step 1/6. In terms of biological role, catalyzes the NADPH-dependent rearrangement and reduction of 1-deoxy-D-xylulose-5-phosphate (DXP) to 2-C-methyl-D-erythritol 4-phosphate (MEP). In Oleidesulfovibrio alaskensis (strain ATCC BAA-1058 / DSM 17464 / G20) (Desulfovibrio alaskensis), this protein is 1-deoxy-D-xylulose 5-phosphate reductoisomerase.